Reading from the N-terminus, the 258-residue chain is Phosphate import ATP-binding protein PstB (258 aa).

An ABC transporter domain is found at L12 to I253. G44 to S51 provides a ligand contact to ATP.

The protein belongs to the ABC transporter superfamily. Phosphate importer (TC 3.A.1.7) family. In terms of assembly, the complex is composed of two ATP-binding proteins (PstB), two transmembrane proteins (PstC and PstA) and a solute-binding protein (PstS).

It localises to the cell inner membrane. The enzyme catalyses phosphate(out) + ATP + H2O = ADP + 2 phosphate(in) + H(+). Its function is as follows. Part of the ABC transporter complex PstSACB involved in phosphate import. Responsible for energy coupling to the transport system. The chain is Phosphate import ATP-binding protein PstB from Bordetella parapertussis (strain 12822 / ATCC BAA-587 / NCTC 13253).